The following is a 311-amino-acid chain: Urease accessory protein UreD (311 aa).

Belongs to the UreD family. UreD, UreF and UreG form a complex that acts as a GTP-hydrolysis-dependent molecular chaperone, activating the urease apoprotein by helping to assemble the nickel containing metallocenter of UreC. The UreE protein probably delivers the nickel.

The protein resides in the cytoplasm. Its function is as follows. Required for maturation of urease via the functional incorporation of the urease nickel metallocenter. The sequence is that of Urease accessory protein UreD from Synechococcus sp. (strain CC9902).